The following is a 201-amino-acid chain: Imidazole glycerol phosphate synthase subunit HisH (201 aa).

The Glutamine amidotransferase type-1 domain occupies 2 to 201 (KVVILDTGCA…ARLLKNFLEM (200 aa)). The Nucleophile role is filled by C77. Catalysis depends on residues H183 and E185.

In terms of assembly, heterodimer of HisH and HisF.

It localises to the cytoplasm. It catalyses the reaction 5-[(5-phospho-1-deoxy-D-ribulos-1-ylimino)methylamino]-1-(5-phospho-beta-D-ribosyl)imidazole-4-carboxamide + L-glutamine = D-erythro-1-(imidazol-4-yl)glycerol 3-phosphate + 5-amino-1-(5-phospho-beta-D-ribosyl)imidazole-4-carboxamide + L-glutamate + H(+). It carries out the reaction L-glutamine + H2O = L-glutamate + NH4(+). It participates in amino-acid biosynthesis; L-histidine biosynthesis; L-histidine from 5-phospho-alpha-D-ribose 1-diphosphate: step 5/9. Its function is as follows. IGPS catalyzes the conversion of PRFAR and glutamine to IGP, AICAR and glutamate. The HisH subunit catalyzes the hydrolysis of glutamine to glutamate and ammonia as part of the synthesis of IGP and AICAR. The resulting ammonia molecule is channeled to the active site of HisF. The polypeptide is Imidazole glycerol phosphate synthase subunit HisH (Photorhabdus laumondii subsp. laumondii (strain DSM 15139 / CIP 105565 / TT01) (Photorhabdus luminescens subsp. laumondii)).